The chain runs to 228 residues: 3-dehydroquinate dehydratase (228 aa).

Residues 30-32 (EWR) and arginine 62 each bind 3-dehydroquinate. Catalysis depends on histidine 118, which acts as the Proton donor/acceptor. Lysine 143 serves as the catalytic Schiff-base intermediate with substrate. Arginine 186, serine 205, and glutamine 209 together coordinate 3-dehydroquinate.

Belongs to the type-I 3-dehydroquinase family. Homodimer.

The catalysed reaction is 3-dehydroquinate = 3-dehydroshikimate + H2O. It functions in the pathway metabolic intermediate biosynthesis; chorismate biosynthesis; chorismate from D-erythrose 4-phosphate and phosphoenolpyruvate: step 3/7. Functionally, involved in the third step of the chorismate pathway, which leads to the biosynthesis of aromatic amino acids. Catalyzes the cis-dehydration of 3-dehydroquinate (DHQ) and introduces the first double bond of the aromatic ring to yield 3-dehydroshikimate. The protein is 3-dehydroquinate dehydratase of Streptococcus pyogenes serotype M12 (strain MGAS9429).